Reading from the N-terminus, the 414-residue chain is L-cysteine:1D-myo-inositol 2-amino-2-deoxy-alpha-D-glucopyranoside ligase (414 aa).

Position 43 (C43) interacts with Zn(2+). L-cysteinyl-5'-AMP-binding positions include 43 to 46, T58, and 81 to 83; these read CGIT and NIT. Residues 45-55 carry the 'HIGH' region motif; it reads ITPYDATHLGH. Positions 189 to 194 match the 'ERGGDP' region motif; it reads ERGGDP. Position 229 (W229) interacts with L-cysteinyl-5'-AMP. C233 lines the Zn(2+) pocket. 251 to 253 contributes to the L-cysteinyl-5'-AMP binding site; it reads GSD. A Zn(2+)-binding site is contributed by H258. I285 is an L-cysteinyl-5'-AMP binding site. Positions 291 to 295 match the 'KMSKS' region motif; the sequence is KMSKS.

It belongs to the class-I aminoacyl-tRNA synthetase family. MshC subfamily. In terms of assembly, monomer. Zn(2+) serves as cofactor.

It carries out the reaction 1D-myo-inositol 2-amino-2-deoxy-alpha-D-glucopyranoside + L-cysteine + ATP = 1D-myo-inositol 2-(L-cysteinylamino)-2-deoxy-alpha-D-glucopyranoside + AMP + diphosphate + H(+). Catalyzes the ATP-dependent condensation of GlcN-Ins and L-cysteine to form L-Cys-GlcN-Ins. This is L-cysteine:1D-myo-inositol 2-amino-2-deoxy-alpha-D-glucopyranoside ligase (mshC) from Mycobacterium bovis (strain ATCC BAA-935 / AF2122/97).